Consider the following 378-residue polypeptide: Flap endonuclease 1 (378 aa).

The interval 1 to 102 (MGIHGLAKLI…GELAKRSERR (102 aa)) is N-domain. Arg19 carries the post-translational modification Symmetric dimethylarginine; by PRMT5. Position 34 (Asp34) interacts with Mg(2+). Positions 47 and 69 each coordinate DNA. Lys78 is subject to N6-acetyllysine. A Mg(2+)-binding site is contributed by Asp84. 2 positions are modified to symmetric dimethylarginine; by PRMT5: Arg98 and Arg102. Positions 120-251 (EVEKFTKRLV…KRAVDLIQKH (132 aa)) are I-domain. Mg(2+) is bound by residues Glu156, Glu158, Asp177, and Asp179. DNA is bound at residue Glu156. Ser185 carries the phosphoserine; by CDK2 modification. Residue Arg190 is modified to Symmetric dimethylarginine; by PRMT5. Ser195 is subject to Phosphoserine. DNA is bound by residues Gly229 and Asp231. Asp231 contributes to the Mg(2+) binding site. Ser253, Ser291, and Ser333 each carry phosphoserine. The disordered stretch occupies residues 325–378 (RLSKSRQGSTQGRLDDFFKVTGSLSSAKRKEPEPKGPAKKKAKTGGAGKFRRGK). Thr334 carries the phosphothreonine modification. The tract at residues 334 to 342 (TQGRLDDFF) is interaction with PCNA. Residues Lys352, Lys373, and Lys378 each carry the N6-acetyllysine modification. Residues 361–378 (PAKKKAKTGGAGKFRRGK) are compositionally biased toward basic residues.

This sequence belongs to the XPG/RAD2 endonuclease family. FEN1 subfamily. As to quaternary structure, interacts with PCNA. Three molecules of FEN1 bind to one PCNA trimer with each molecule binding to one PCNA monomer. PCNA stimulates the nuclease activity without altering cleavage specificity. The C-terminal domain binds EP300; can bind simultaneously to both PCNA and EP300. Interacts with DDX11; this interaction is direct and increases flap endonuclease activity of FEN1. Interacts with WDR4; regulating its endonuclease activity. Interacts with POLB. Mg(2+) serves as cofactor. Post-translationally, acetylated by EP300. Acetylation inhibits both endonuclease and exonuclease activity. Acetylation also reduces DNA-binding activity but does not affect interaction with PCNA or EP300. In terms of processing, phosphorylation upon DNA damage induces relocalization to the nuclear plasma. Phosphorylation at Ser-185 by CDK2 occurs during late S-phase and results in dissociation from PCNA. Methylation at Arg-190 by PRMT5 impedes Ser-185 phosphorylation and increases interaction with PCNA.

It is found in the nucleus. Its subcellular location is the nucleolus. The protein localises to the nucleoplasm. The protein resides in the mitochondrion. Its function is as follows. Structure-specific nuclease with 5'-flap endonuclease and 5'-3' exonuclease activities involved in DNA replication and repair. During DNA replication, cleaves the 5'-overhanging flap structure that is generated by displacement synthesis when DNA polymerase encounters the 5'-end of a downstream Okazaki fragment. It enters the flap from the 5'-end and then tracks to cleave the flap base, leaving a nick for ligation. Also involved in the long patch base excision repair (LP-BER) pathway, by cleaving within the apurinic/apyrimidinic (AP) site-terminated flap. Acts as a genome stabilization factor that prevents flaps from equilibrating into structures that lead to duplications and deletions. Also possesses 5'-3' exonuclease activity on nicked or gapped double-stranded DNA, and exhibits RNase H activity. Also involved in replication and repair of rDNA and in repairing mitochondrial DNA. The polypeptide is Flap endonuclease 1 (Mus musculus (Mouse)).